The sequence spans 229 residues: PKHD-type hydroxylase BRADO6316 (229 aa).

One can recognise a Fe2OG dioxygenase domain in the interval 78-180 (QIFPPLFNRY…RVASFFWLQS (103 aa)). Fe cation is bound by residues histidine 98, aspartate 100, and histidine 161. Arginine 171 lines the 2-oxoglutarate pocket.

Requires Fe(2+) as cofactor. It depends on L-ascorbate as a cofactor.

This is PKHD-type hydroxylase BRADO6316 from Bradyrhizobium sp. (strain ORS 278).